Here is a 97-residue protein sequence, read N- to C-terminus: MEIIKDALAGTLESSDVMVRIGPCDEPGIHLELESLVKQQFGNAIERVARETLAKLGVERAHVVIDDKGALECVLRARVQAAVMRAAEQTEIQWGAI.

Ser-14 bears the O-(phosphoribosyl dephospho-coenzyme A)serine mark.

The protein belongs to the CitD family. In terms of assembly, oligomer with a subunit composition of (alpha,beta,gamma)6.

It localises to the cytoplasm. Functionally, covalent carrier of the coenzyme of citrate lyase. This chain is Citrate lyase acyl carrier protein, found in Escherichia fergusonii (strain ATCC 35469 / DSM 13698 / CCUG 18766 / IAM 14443 / JCM 21226 / LMG 7866 / NBRC 102419 / NCTC 12128 / CDC 0568-73).